The following is a 306-amino-acid chain: Probable protein ABIL1 (306 aa).

Residues 200 to 236 (KNSKTNGARQSEFVLEETKATKPASRGKEPSTSPLPK) are disordered.

The protein belongs to the ABI family. Binds SCAR.

Its subcellular location is the cytoplasm. The protein resides in the cytoskeleton. Involved in regulation of actin and microtubule organization. Part of a WAVE complex that activates the Arp2/3 complex. This is Probable protein ABIL1 from Oryza sativa subsp. japonica (Rice).